Here is a 376-residue protein sequence, read N- to C-terminus: Methionine import ATP-binding protein MetN 2 (376 aa).

Residues 1-25 (MTATAQRQRPIDTTGAGQRAQQAEL) form a disordered region. The ABC transporter domain maps to 34-273 (VRFINLGKTY…PQHEVSKTLL (240 aa)). Residue 70–77 (GRSGAGKS) coordinates ATP.

Belongs to the ABC transporter superfamily. Methionine importer (TC 3.A.1.24) family. In terms of assembly, the complex is composed of two ATP-binding proteins (MetN), two transmembrane proteins (MetI) and a solute-binding protein (MetQ).

It localises to the cell inner membrane. The enzyme catalyses L-methionine(out) + ATP + H2O = L-methionine(in) + ADP + phosphate + H(+). It catalyses the reaction D-methionine(out) + ATP + H2O = D-methionine(in) + ADP + phosphate + H(+). Its function is as follows. Part of the ABC transporter complex MetNIQ involved in methionine import. Responsible for energy coupling to the transport system. The chain is Methionine import ATP-binding protein MetN 2 from Pseudomonas syringae pv. syringae (strain B728a).